Here is a 314-residue protein sequence, read N- to C-terminus: Probable dimethyladenosine transferase (314 aa).

His-36, Leu-38, Gly-63, Glu-84, Asp-112, and Asn-127 together coordinate S-adenosyl-L-methionine.

Belongs to the class I-like SAM-binding methyltransferase superfamily. rRNA adenine N(6)-methyltransferase family. In terms of assembly, part of the small subunit (SSU) processome, composed of more than 70 proteins and the RNA chaperone small nucleolar RNA (snoRNA) U3.

It localises to the nucleus. The protein resides in the nucleoplasm. Its subcellular location is the nucleolus. It carries out the reaction adenosine(1779)/adenosine(1780) in 18S rRNA + 4 S-adenosyl-L-methionine = N(6)-dimethyladenosine(1779)/N(6)-dimethyladenosine(1780) in 18S rRNA + 4 S-adenosyl-L-homocysteine + 4 H(+). Its function is as follows. Specifically dimethylates two adjacent adenosines in the loop of a conserved hairpin near the 3'-end of 18S rRNA in the 40S particle. Involved in the pre-rRNA processing steps leading to small-subunit rRNA production independently of its RNA-modifying catalytic activity. Part of the small subunit (SSU) processome, first precursor of the small eukaryotic ribosomal subunit. During the assembly of the SSU processome in the nucleolus, many ribosome biogenesis factors, an RNA chaperone and ribosomal proteins associate with the nascent pre-rRNA and work in concert to generate RNA folding, modifications, rearrangements and cleavage as well as targeted degradation of pre-ribosomal RNA by the RNA exosome. In Dictyostelium discoideum (Social amoeba), this protein is Probable dimethyladenosine transferase (dimt1).